A 444-amino-acid polypeptide reads, in one-letter code: UDP-N-acetylglucosamine 1-carboxyvinyltransferase (444 aa).

Phosphoenolpyruvate is bound at residue 22-23 (KN). UDP-N-acetyl-alpha-D-glucosamine is bound at residue arginine 94. Residue aspartate 119 is the Proton donor of the active site. UDP-N-acetyl-alpha-D-glucosamine contacts are provided by aspartate 309 and valine 331.

It belongs to the EPSP synthase family. MurA subfamily.

Its subcellular location is the cytoplasm. The catalysed reaction is phosphoenolpyruvate + UDP-N-acetyl-alpha-D-glucosamine = UDP-N-acetyl-3-O-(1-carboxyvinyl)-alpha-D-glucosamine + phosphate. It functions in the pathway cell wall biogenesis; peptidoglycan biosynthesis. Cell wall formation. Adds enolpyruvyl to UDP-N-acetylglucosamine. This chain is UDP-N-acetylglucosamine 1-carboxyvinyltransferase, found in Chlamydia abortus (strain DSM 27085 / S26/3) (Chlamydophila abortus).